The sequence spans 164 residues: Protein SprT (164 aa).

Positions 14 to 156 constitute a SprT-like domain; that stretch reads QLAESFFKRP…LCRRCRNTLV (143 aa). Position 69 (His-69) interacts with Zn(2+). Glu-70 is a catalytic residue. His-73 is a binding site for Zn(2+).

It belongs to the SprT family. Requires Zn(2+) as cofactor.

It localises to the cytoplasm. In Pseudomonas fluorescens (strain Pf0-1), this protein is Protein SprT.